The following is a 366-amino-acid chain: UDP-N-acetylenolpyruvoylglucosamine reductase (366 aa).

The FAD-binding PCMH-type domain occupies 29–203 (VGPVARTLVT…LEVEFALDAS (175 aa)). Arginine 177 is an active-site residue. The Proton donor role is filled by serine 258. Glutamate 358 is an active-site residue.

It belongs to the MurB family. FAD serves as cofactor.

It is found in the cytoplasm. The enzyme catalyses UDP-N-acetyl-alpha-D-muramate + NADP(+) = UDP-N-acetyl-3-O-(1-carboxyvinyl)-alpha-D-glucosamine + NADPH + H(+). The protein operates within cell wall biogenesis; peptidoglycan biosynthesis. Functionally, cell wall formation. The chain is UDP-N-acetylenolpyruvoylglucosamine reductase from Mycobacterium ulcerans (strain Agy99).